A 683-amino-acid chain; its full sequence is Protein zntD (683 aa).

3 consecutive transmembrane segments (helical) span residues 12–32 (IISTTVLFILSLLAGIAPYWM), 42–62 (LSWSNTFAGGVFFGAGMLHLF), and 79–99 (PFAALCLCVGFLITLFLELII). Positions 120–129 (VHLSHGHSHH) are enriched in basic residues. 4 disordered regions span residues 120–180 (VHLS…TTTT), 299–325 (GFSNNNNNNNNNNNNNNKNNNNNNNNN), 364–390 (CSNDNSNSNNNNSSNNNSSSANITPNT), and 451–489 (IGNSGNIGSNNNNNNNGGGGGGGGNSNIDYNDNEENNNN). Positions 137-149 (GNPGSGVGIGMGS) are enriched in gly residues. Low complexity-rich tracts occupy residues 160 to 180 (TTSPTITPTTPSEGTTTTTTT) and 302 to 325 (NNNNNNNNNNNNNNKNNNNNNNNN). Residues 451–465 (IGNSGNIGSNNNNNN) are compositionally biased toward low complexity. Residues 466–475 (NGGGGGGGGN) are compositionally biased toward gly residues. Residues 476–489 (SNIDYNDNEENNNN) are compositionally biased toward low complexity. The next 5 membrane-spanning stretches (helical) occupy residues 534–554 (ILLPFILVIALSIHSLFEGLA), 564–584 (VFDILIAIFAHKILASFALGI), 600–620 (FLLVFVFSLTSPIGSILGMVI), 631–651 (PPILQGIASGTFLYVAVVEII), and 662–682 (ILIKSFLLLLGFSGMAVVAIW).

It belongs to the ZIP transporter (TC 2.A.5) family.

Its subcellular location is the membrane. In terms of biological role, may transport divalent cations. May participate, with dstA, in the regulation of the differentiation of stalk cells during development. In Dictyostelium discoideum (Social amoeba), this protein is Protein zntD (zntD).